The following is a 134-amino-acid chain: Profilin-4 (134 aa).

A disulfide bond links Cys-13 and Cys-118. An Involved in PIP2 interaction motif is present at residues Ala-84–Thr-100. At Thr-114 the chain carries Phosphothreonine.

Belongs to the profilin family. As to quaternary structure, occurs in many kinds of cells as a complex with monomeric actin in a 1:1 ratio. In terms of processing, phosphorylated by MAP kinases.

It localises to the cytoplasm. The protein localises to the cytoskeleton. Binds to actin and affects the structure of the cytoskeleton. At high concentrations, profilin prevents the polymerization of actin, whereas it enhances it at low concentrations. In Olea europaea (Common olive), this protein is Profilin-4.